We begin with the raw amino-acid sequence, 286 residues long: Beta-lactamase SHV-24 (286 aa).

The first 21 residues, 1-21 (MRYIRLCIISLLATLPLAVHA), serve as a signal peptide directing secretion. The Acyl-ester intermediate role is filled by Ser-66. A disulfide bond links Cys-73 and Cys-119. The active-site Proton acceptor is the Glu-164. 230–232 (KTG) serves as a coordination point for substrate.

This sequence belongs to the class-A beta-lactamase family.

It carries out the reaction a beta-lactam + H2O = a substituted beta-amino acid. Hydrolyzes ampicillin. Can also hydrolyze cephaloridine, aztreonam and ceftazidime with a low catalytic rate. This is Beta-lactamase SHV-24 (bla) from Escherichia coli.